We begin with the raw amino-acid sequence, 171 residues long: uncharacterized protein (171 aa).

Disordered regions lie at residues 1–41 (MDAV…SKPK) and 114–147 (DSLGNTASSSSMDPAKGVPSQSGPPEGLGLRPKR). The segment covering 27–38 (AQQQQGPSAQGS) has biased composition (low complexity). A compositionally biased stretch (polar residues) spans 116–125 (LGNTASSSSM).

This is an uncharacterized protein from Mus musculus (Mouse).